Reading from the N-terminus, the 172-residue chain is Shikimate kinase (172 aa).

Position 11 to 16 (11 to 16) interacts with ATP; it reads GAGKST. Mg(2+) is bound at residue serine 15. Substrate-binding residues include aspartate 33, arginine 57, and glycine 79. ATP is bound at residue arginine 117. Arginine 136 lines the substrate pocket. Arginine 153 is a binding site for ATP.

The protein belongs to the shikimate kinase family. In terms of assembly, monomer. Mg(2+) is required as a cofactor.

The protein resides in the cytoplasm. The enzyme catalyses shikimate + ATP = 3-phosphoshikimate + ADP + H(+). Its pathway is metabolic intermediate biosynthesis; chorismate biosynthesis; chorismate from D-erythrose 4-phosphate and phosphoenolpyruvate: step 5/7. Its function is as follows. Catalyzes the specific phosphorylation of the 3-hydroxyl group of shikimic acid using ATP as a cosubstrate. This Pseudomonas syringae pv. tomato (strain ATCC BAA-871 / DC3000) protein is Shikimate kinase.